The chain runs to 111 residues: Cell cycle protein GpsB (111 aa).

A coiled-coil region spans residues L32–S63. The segment at Q59 to E80 is disordered. Residues A60–E71 are compositionally biased toward polar residues.

It belongs to the GpsB family. In terms of assembly, forms polymers through the coiled coil domains. Interacts with PBP1, MreC and EzrA.

It localises to the cytoplasm. Functionally, divisome component that associates with the complex late in its assembly, after the Z-ring is formed, and is dependent on DivIC and PBP2B for its recruitment to the divisome. Together with EzrA, is a key component of the system that regulates PBP1 localization during cell cycle progression. Its main role could be the removal of PBP1 from the cell pole after pole maturation is completed. Also contributes to the recruitment of PBP1 to the division complex. Not essential for septum formation. The protein is Cell cycle protein GpsB of Streptococcus suis (strain 98HAH33).